We begin with the raw amino-acid sequence, 280 residues long: Probable S-methyl-5'-thioinosine phosphorylase (280 aa).

Residues T8 and 50-51 (RH) each bind phosphate. A substrate-binding site is contributed by M175. T176 serves as a coordination point for phosphate. Substrate is bound at residue 199–201 (NYA).

Belongs to the PNP/MTAP phosphorylase family. MTAP subfamily. In terms of assembly, homotrimer.

The catalysed reaction is S-methyl-5'-thioinosine + phosphate = 5-(methylsulfanyl)-alpha-D-ribose 1-phosphate + hypoxanthine. Its pathway is purine metabolism; purine nucleoside salvage. Functionally, catalyzes the reversible phosphorylation of S-methyl-5'-thioinosine (MTI) to hypoxanthine and 5-methylthioribose-1-phosphate. Involved in the breakdown of S-methyl-5'-thioadenosine (MTA), a major by-product of polyamine biosynthesis. Catabolism of (MTA) occurs via deamination to MTI and phosphorolysis to hypoxanthine. The chain is Probable S-methyl-5'-thioinosine phosphorylase from Methanothermobacter thermautotrophicus (strain ATCC 29096 / DSM 1053 / JCM 10044 / NBRC 100330 / Delta H) (Methanobacterium thermoautotrophicum).